Consider the following 249-residue polypeptide: Probable transcriptional regulatory protein Strop_1792 (249 aa).

This sequence belongs to the TACO1 family.

It localises to the cytoplasm. The sequence is that of Probable transcriptional regulatory protein Strop_1792 from Salinispora tropica (strain ATCC BAA-916 / DSM 44818 / JCM 13857 / NBRC 105044 / CNB-440).